A 655-amino-acid chain; its full sequence is WD repeat-containing protein 70 (655 aa).

2 disordered regions span residues 1–24 (MEHS…LAVT) and 43–170 (FEQT…PIHR). The segment covering 45–78 (QTRRTAVERSRKTLEAREKEEEMNREKELRKQLE) has biased composition (basic and acidic residues). Positions 99 to 112 (RDTSSSDSDHSSGS) are enriched in low complexity. The span at 148-165 (EEGEDDDDDDLEDEGEED) shows a compositional bias: acidic residues. WD repeat units lie at residues 181–220 (HGTK…ASFK), 228–269 (CECH…ECIK), 282–322 (GHTA…KQKS), 331–370 (GKKV…HPKF), 377–416 (APGT…KPLF), 422–467 (PTLF…RVYE), and 470–509 (ITDA…QRGA). A Glycyl lysine isopeptide (Lys-Gly) (interchain with G-Cter in SUMO2) cross-link involves residue Lys297. N6-acetyllysine is present on Lys453. Residues 541-566 (REPRQRSTRKQLEKDRLDPLKSHKPE) are compositionally biased toward basic and acidic residues. Residues 541 to 582 (REPRQRSTRKQLEKDRLDPLKSHKPEPPVAGPGRGGRVGTHG) are disordered. The span at 572–582 (PGRGGRVGTHG) shows a compositional bias: gly residues. Phosphothreonine is present on Thr580. Residues Lys591 and Lys597 each participate in a glycyl lysine isopeptide (Lys-Gly) (interchain with G-Cter in SUMO2) cross-link. A phosphoserine mark is found at Ser622 and Ser639. The interval 632 to 655 (TMFAQVESDDEESKNEPEWKKRKI) is disordered. Over residues 645-655 (KNEPEWKKRKI) the composition is skewed to basic and acidic residues.

The protein belongs to the WD repeat GAD-1 family.

The protein is WD repeat-containing protein 70 (Wdr70) of Rattus norvegicus (Rat).